Here is a 160-residue protein sequence, read N- to C-terminus: Sec-independent protein translocase protein TatB (160 aa).

The helical transmembrane segment at 1–21 threads the bilayer; sequence MFGMGFFEILVVLVVAIIFLG. A disordered region spans residues 118 to 160; sequence HLNEEVSNEEALNKEVSSDESPKEVQLATDNNTKEHDKEKENV. Composition is skewed to basic and acidic residues over residues 128-140 and 149-160; these read ALNK…ESPK and NTKEHDKEKENV.

The protein belongs to the TatB family. As to quaternary structure, the Tat system comprises two distinct complexes: a TatABC complex, containing multiple copies of TatA, TatB and TatC subunits, and a separate TatA complex, containing only TatA subunits. Substrates initially bind to the TatABC complex, which probably triggers association of the separate TatA complex to form the active translocon.

The protein localises to the cell inner membrane. Functionally, part of the twin-arginine translocation (Tat) system that transports large folded proteins containing a characteristic twin-arginine motif in their signal peptide across membranes. Together with TatC, TatB is part of a receptor directly interacting with Tat signal peptides. TatB may form an oligomeric binding site that transiently accommodates folded Tat precursor proteins before their translocation. The chain is Sec-independent protein translocase protein TatB from Helicobacter pylori (strain ATCC 700392 / 26695) (Campylobacter pylori).